The chain runs to 562 residues: MNNKIEKNDNNFIYKIINEDFKKNKNLLLHTRFPPEPNGYLHIGHAKSICLNFELANVYNGYCNLRFDDTNPVKENIKYINSIKNDIKWLGYQWHKKVRYSSEYFPILYEYAKELIQKGLAYVDELTKEEIREYRGTLSTVGKNSPYRNRSITENLKLFEKMKKGEFKEGEACLRAKINMSSSFIVMRDPVLYRIIFSTHHQTKKKWCIYPTYDFAHCLSDSIEGITHSFCTLEFQDNKNLYNWILKNTSIKHYSKQYEFSRLNLEYSILSKRKISILIEKKIVNGWDDPRILTISGLRKKGYTASSIRDFCHRIGITKQNNLIEFSMLEYCIRKELNKKAIRTMAVLEPIKIFLYNIDNDHEEKLIVPNHPKHLHLGTHEIIFTNTIYIEREDFKEKYDKKYKRLKIGEEVRLRYAYIIKAEKIEKDESGNIIKIICFCDINSLGKKPINRKNPAVIHWIAVKNSFPAKFKLYNQLFKIKNPDQEKNFLSYLNSNSLIVKNGFVEKKIAQKIIKKMSNNFIKLFFQFERTGYFCVDEVDSKENKLVFNRTVSLKDSWNLKK.

Positions proline 35–histidine 45 match the 'HIGH' region motif. ATP is bound by residues glutamate 36–asparagine 38 and histidine 42–serine 48. Aspartate 68 and tyrosine 213 together coordinate L-glutamine. Residues threonine 232, arginine 262–leucine 263, and leucine 270–lysine 272 contribute to the ATP site. The 'KMSKS' region motif lies at isoleucine 269–arginine 273.

It belongs to the class-I aminoacyl-tRNA synthetase family. In terms of assembly, monomer.

It is found in the cytoplasm. It catalyses the reaction tRNA(Gln) + L-glutamine + ATP = L-glutaminyl-tRNA(Gln) + AMP + diphosphate. The chain is Glutamine--tRNA ligase from Buchnera aphidicola subsp. Schizaphis graminum (strain Sg).